Consider the following 111-residue polypeptide: TPR repeat-containing protein associated with Hsp90 (111 aa).

Serine 2 is subject to N-acetylserine. TPR repeat units lie at residues 4-37 and 39-71; these read FEKQ…QPQN and VGYS…TSTA.

Component of the R2TP complex composed at least of RVB1, RVB2, TAH1 and PIH1. Also interacts with HSP90.

Its subcellular location is the cytoplasm. The protein resides in the nucleus. The polypeptide is TPR repeat-containing protein associated with Hsp90 (TAH1) (Saccharomyces cerevisiae (strain ATCC 204508 / S288c) (Baker's yeast)).